A 272-amino-acid chain; its full sequence is DNA repair protein RecO (272 aa).

It belongs to the RecO family.

Its function is as follows. Involved in DNA repair and RecF pathway recombination. This is DNA repair protein RecO from Latilactobacillus sakei subsp. sakei (strain 23K) (Lactobacillus sakei subsp. sakei).